A 287-amino-acid chain; its full sequence is Large ribosomal subunit protein uL2 (287 aa).

Residues 222–266 (RGIRPTVRGSAMNPNDHPHGGGEGRSPVGRDAPRTPWGKRHMGVK) form a disordered region.

This sequence belongs to the universal ribosomal protein uL2 family. In terms of assembly, part of the 50S ribosomal subunit. Forms a bridge to the 30S subunit in the 70S ribosome.

One of the primary rRNA binding proteins. Required for association of the 30S and 50S subunits to form the 70S ribosome, for tRNA binding and peptide bond formation. It has been suggested to have peptidyltransferase activity; this is somewhat controversial. Makes several contacts with the 16S rRNA in the 70S ribosome. This chain is Large ribosomal subunit protein uL2, found in Mycoplasma pneumoniae (strain ATCC 29342 / M129 / Subtype 1) (Mycoplasmoides pneumoniae).